The following is a 303-amino-acid chain: D-alanine--D-alanine ligase B (303 aa).

The 196-residue stretch at 103-298 (KLLWKGAGLP…YEDLCLKVLD (196 aa)) folds into the ATP-grasp domain. 129–184 (ERQLGLPIFVKPSTEGSSIGVTKVKQPGELRAAFEEARKYDKVVIAEQFIGGGEYT) contributes to the ATP binding site. The Mg(2+) site is built by Asp252, Glu265, and Asn267.

It belongs to the D-alanine--D-alanine ligase family. Mg(2+) is required as a cofactor. Mn(2+) serves as cofactor.

The protein resides in the cytoplasm. The enzyme catalyses 2 D-alanine + ATP = D-alanyl-D-alanine + ADP + phosphate + H(+). The protein operates within cell wall biogenesis; peptidoglycan biosynthesis. Its function is as follows. Cell wall formation. The sequence is that of D-alanine--D-alanine ligase B from Chromobacterium violaceum (strain ATCC 12472 / DSM 30191 / JCM 1249 / CCUG 213 / NBRC 12614 / NCIMB 9131 / NCTC 9757 / MK).